Here is a 208-residue protein sequence, read N- to C-terminus: Pyridoxine/pyridoxamine 5'-phosphate oxidase (208 aa).

FMN-binding positions include Arg-55–Lys-60, Tyr-70–Thr-71, Lys-76, Lys-77, and Gln-99. Lys-60 lines the substrate pocket. Residues Tyr-117, Arg-121, and Ser-125 each contribute to the substrate site. FMN is bound by residues Gln-134 to Ser-135 and Trp-179. Residue Arg-185–His-187 participates in substrate binding. Arg-189 serves as a coordination point for FMN.

It belongs to the pyridoxamine 5'-phosphate oxidase family. In terms of assembly, homodimer. FMN serves as cofactor.

The catalysed reaction is pyridoxamine 5'-phosphate + O2 + H2O = pyridoxal 5'-phosphate + H2O2 + NH4(+). The enzyme catalyses pyridoxine 5'-phosphate + O2 = pyridoxal 5'-phosphate + H2O2. It participates in cofactor metabolism; pyridoxal 5'-phosphate salvage; pyridoxal 5'-phosphate from pyridoxamine 5'-phosphate: step 1/1. It functions in the pathway cofactor metabolism; pyridoxal 5'-phosphate salvage; pyridoxal 5'-phosphate from pyridoxine 5'-phosphate: step 1/1. Catalyzes the oxidation of either pyridoxine 5'-phosphate (PNP) or pyridoxamine 5'-phosphate (PMP) into pyridoxal 5'-phosphate (PLP). This Brucella abortus biovar 1 (strain 9-941) protein is Pyridoxine/pyridoxamine 5'-phosphate oxidase.